A 569-amino-acid polypeptide reads, in one-letter code: Urease subunit alpha (569 aa).

The region spanning 131–569 (GGIDTHIHFI…LPLAQRYLLL (439 aa)) is the Urease domain. 3 residues coordinate Ni(2+): histidine 136, histidine 138, and lysine 219. Lysine 219 bears the N6-carboxylysine mark. Histidine 221 lines the substrate pocket. Positions 248 and 274 each coordinate Ni(2+). The active-site Proton donor is the histidine 322. Aspartate 362 serves as a coordination point for Ni(2+).

It belongs to the metallo-dependent hydrolases superfamily. Urease alpha subunit family. As to quaternary structure, heterotrimer of UreA (gamma), UreB (beta) and UreC (alpha) subunits. Three heterotrimers associate to form the active enzyme. Ni cation serves as cofactor. Carboxylation allows a single lysine to coordinate two nickel ions.

It is found in the cytoplasm. The enzyme catalyses urea + 2 H2O + H(+) = hydrogencarbonate + 2 NH4(+). It functions in the pathway nitrogen metabolism; urea degradation; CO(2) and NH(3) from urea (urease route): step 1/1. The polypeptide is Urease subunit alpha (Parasynechococcus marenigrum (strain WH8102)).